The following is a 415-amino-acid chain: UDP-N-acetylmuramoylalanine--D-glutamate ligase (415 aa).

Residue 91–97 (GTDGKST) participates in ATP binding.

It belongs to the MurCDEF family.

The protein localises to the cytoplasm. The enzyme catalyses UDP-N-acetyl-alpha-D-muramoyl-L-alanine + D-glutamate + ATP = UDP-N-acetyl-alpha-D-muramoyl-L-alanyl-D-glutamate + ADP + phosphate + H(+). It participates in cell wall biogenesis; peptidoglycan biosynthesis. Functionally, cell wall formation. Catalyzes the addition of glutamate to the nucleotide precursor UDP-N-acetylmuramoyl-L-alanine (UMA). This chain is UDP-N-acetylmuramoylalanine--D-glutamate ligase, found in Aquifex aeolicus (strain VF5).